A 132-amino-acid polypeptide reads, in one-letter code: UPF0332 protein TM_1000 (132 aa).

This sequence belongs to the UPF0332 family.

The polypeptide is UPF0332 protein TM_1000 (Thermotoga maritima (strain ATCC 43589 / DSM 3109 / JCM 10099 / NBRC 100826 / MSB8)).